We begin with the raw amino-acid sequence, 230 residues long: All-trans retinoic acid-induced differentiation factor (230 aa).

An N-terminal signal peptide occupies residues 1–26 (MTANVTVSSMYLFTVLLLLFNVYVNS). Residues 27–200 (QDTDAQLCQM…YKCMRQGEFP (174 aa)) lie on the Extracellular side of the membrane. The region spanning 152–194 (QKNACNQTVQMPLVCPENSLCSPYGPGFFECSCLNNFHGYKCM) is the EGF-like domain. 3 disulfide bridges follow: cysteine 156–cysteine 172, cysteine 166–cysteine 182, and cysteine 184–cysteine 193. Residues 201 to 221 (LVKVLGILTASTVVVSSVLWF) form a helical membrane-spanning segment. Topologically, residues 222-230 (TQRRKVKNT) are cytoplasmic.

It localises to the nucleus envelope. It is found in the cell membrane. Its subcellular location is the lysosome membrane. Its function is as follows. Involved in osteoblast cell differentiation. May play a role in inducing the cell cycle arrest. In Danio rerio (Zebrafish), this protein is All-trans retinoic acid-induced differentiation factor (atraid).